A 167-amino-acid chain; its full sequence is SsrA-binding protein (167 aa).

A compositionally biased stretch (basic and acidic residues) spans 139–158; it reads QNHDKRDAAKERDWQRDKQR. The segment at 139 to 167 is disordered; that stretch reads QNHDKRDAAKERDWQRDKQRVMRRHNRDA.

This sequence belongs to the SmpB family.

It localises to the cytoplasm. Its function is as follows. Required for rescue of stalled ribosomes mediated by trans-translation. Binds to transfer-messenger RNA (tmRNA), required for stable association of tmRNA with ribosomes. tmRNA and SmpB together mimic tRNA shape, replacing the anticodon stem-loop with SmpB. tmRNA is encoded by the ssrA gene; the 2 termini fold to resemble tRNA(Ala) and it encodes a 'tag peptide', a short internal open reading frame. During trans-translation Ala-aminoacylated tmRNA acts like a tRNA, entering the A-site of stalled ribosomes, displacing the stalled mRNA. The ribosome then switches to translate the ORF on the tmRNA; the nascent peptide is terminated with the 'tag peptide' encoded by the tmRNA and targeted for degradation. The ribosome is freed to recommence translation, which seems to be the essential function of trans-translation. The polypeptide is SsrA-binding protein (Xanthomonas oryzae pv. oryzae (strain MAFF 311018)).